We begin with the raw amino-acid sequence, 807 residues long: Leucine--tRNA ligase (807 aa).

A 'HIGH' region motif is present at residues 40-51 (PYPSGQGLHVGH). Positions 575–579 (KMSKS) match the 'KMSKS' region motif. Residue Lys-578 participates in ATP binding.

Belongs to the class-I aminoacyl-tRNA synthetase family.

The protein localises to the cytoplasm. The enzyme catalyses tRNA(Leu) + L-leucine + ATP = L-leucyl-tRNA(Leu) + AMP + diphosphate. The chain is Leucine--tRNA ligase from Latilactobacillus sakei subsp. sakei (strain 23K) (Lactobacillus sakei subsp. sakei).